The sequence spans 63 residues: Metallothionein-2 (63 aa).

Belongs to the metallothionein superfamily. Type 6 family.

This protein binds cations of several transition elements. The sequence is that of Metallothionein-2 (mtl-2) from Caenorhabditis elegans.